Reading from the N-terminus, the 405-residue chain is 5-azacytidine-induced protein 2 (405 aa).

The interval 1–198 (MDTLVEDDIC…TELQKARQTG (198 aa)) is homodimerization. Residues 40-197 (ALVTAYEDIK…RTELQKARQT (158 aa)) are a coiled coil. The tract at residues 229 to 270 (SDNMQHAYWELKREMSNLHLVTQVQAELLRKLKTSAAVKKAC) is interaction with TBK1 and IKBKE. Residues Ser-331 and Ser-366 each carry the phosphoserine modification. Residues 357-377 (LEDNSWVFPSPPKSSETAFGE) form a disordered region.

In terms of assembly, homodimer. Interacts with IKBKE and TBK1. Interacts with TICAM1. Interacts with TAX1BP1. Interacts with CALCOCO2. Post-translationally, ubiquitinated via 'Lys-48'-linked polyubiquitination by TRIM38, leading to its degradation. In terms of tissue distribution, testis, ovary, heart, lung, kidney and brain. Expressed mainly in the spermatocytes or spermatids in the testis.

The protein localises to the cytoplasm. Adapter protein which binds TBK1 and IKBKE playing a role in antiviral innate immunity. Activates serine/threonine-protein kinase TBK1 and facilitates its oligomerization. Enhances the phosphorylation of NF-kappa-B p65 subunit RELA by TBK1. Promotes TBK1-induced as well as TNF-alpha or PMA-induced activation of NF-kappa-B. Participates in IFNB promoter activation via TICAM1. The polypeptide is 5-azacytidine-induced protein 2 (Azi2) (Mus musculus (Mouse)).